The sequence spans 463 residues: Autophagy-related protein 36 (463 aa).

The segment at 5–45 adopts an RING-type; atypical zinc-finger fold; that stretch reads CSICLEVLVDKEAFTEPCLHYYHNECIKEWTKRANTCPKCR. The PHD-type zinc-finger motif lies at 85 to 131; the sequence is TNLCALCEDPSTSLIYCESCGGSFHFNCIGIGDELDSEWCCPLCGMF. Over residues 229–242 the composition is skewed to polar residues; it reads TQNSQSSEFSTENN. The tract at residues 229-281 is disordered; sequence TQNSQSSEFSTENNVVPLKNTHELGRKLKKPRRASGIKKNVVERSSSHQSTQI. Basic residues predominate over residues 255–264; that stretch reads KLKKPRRASG.

Interacts with ATG28.

Micropexophagy-specific protein required for efficient micropexophagic apparatus (MIPA) formation but not for general autophagy. This chain is Autophagy-related protein 36 (ATG35), found in Komagataella phaffii (strain GS115 / ATCC 20864) (Yeast).